A 270-amino-acid polypeptide reads, in one-letter code: MATVPEPTSEMMSYYYSDNENDLFFEADGPRKMKCCFQDLNNSSLKDEGIQLHISHQLQNKSLRHFVSVVVALEKLKKISLPCSQPLQDDDLKNVFCCIFEEEPIVCEVYDDDAFVCDAPLQSLDCKFRDKNQKSLVLYNSYELRALHLNGSSVNQQAVFRMSFLQGDENSNKIPVALCIKEKNLYLSCVMKDGKPTLQLEMLDPRVYPKKKMEKRFVFNKTEVKKILEFESSQFPNWYISTSKAEAMPVFLGNTKGGQDITDFTMEFSS.

The propeptide occupies 1 to 118; it reads MATVPEPTSE…VYDDDAFVCD (118 aa).

The protein belongs to the IL-1 family. In terms of assembly, monomer. In its precursor form, weakly interacts with full-length MEFV; the mature cytokine does not interact at all. Interacts with integrins ITGAV:ITGBV and ITGA5:ITGB1; integrin-binding is required for IL1B signaling. Interacts with cargo receptor TMED10; the interaction is direct and is required for the secretion of IL1B mature form. Interacts with HSP90AB1; the interaction facilitates cargo translocation into the ERGIC. Interacts with HSP90B1; the interaction facilitates cargo translocation into the ERGIC.

It localises to the cytoplasm. The protein resides in the cytosol. It is found in the secreted. Its subcellular location is the lysosome. The protein localises to the extracellular exosome. Potent pro-inflammatory cytokine. Initially discovered as the major endogenous pyrogen, induces prostaglandin synthesis, neutrophil influx and activation, T-cell activation and cytokine production, B-cell activation and antibody production, and fibroblast proliferation and collagen production. Promotes Th17 differentiation of T-cells. Synergizes with IL12/interleukin-12 to induce IFNG synthesis from T-helper 1 (Th1) cells. Plays a role in angiogenesis by inducing VEGF production synergistically with TNF and IL6. Involved in transduction of inflammation downstream of pyroptosis: its mature form is specifically released in the extracellular milieu by passing through the gasdermin-D (GSDMD) pore. This Phoca vitulina richardii (Pacific harbor seal) protein is Interleukin-1 beta (IL1B).